The following is a 261-amino-acid chain: tRNA (guanine-N(1)-)-methyltransferase (261 aa).

S-adenosyl-L-methionine contacts are provided by residues Gly-113 and 133 to 138 (IGDYVL).

Belongs to the RNA methyltransferase TrmD family. Homodimer.

It is found in the cytoplasm. It catalyses the reaction guanosine(37) in tRNA + S-adenosyl-L-methionine = N(1)-methylguanosine(37) in tRNA + S-adenosyl-L-homocysteine + H(+). Its function is as follows. Specifically methylates guanosine-37 in various tRNAs. The sequence is that of tRNA (guanine-N(1)-)-methyltransferase from Xylella fastidiosa (strain M23).